A 68-amino-acid polypeptide reads, in one-letter code: Conotoxin Eb11.7 (68 aa).

The N-terminal stretch at 1–26 (MMFRLTSVSCFLLVIVCLNLFQVVLT) is a signal peptide. Disulfide bonds link Cys-29–Cys-43, Cys-36–Cys-48, Cys-42–Cys-52, and Cys-47–Cys-56. A Phenylalanine amide modification is found at Phe-60. The propeptide occupies 64–68 (ATFQE).

The protein belongs to the conotoxin I2 superfamily. As to expression, expressed by the venom duct.

It is found in the secreted. This Conus eburneus (Ivory cone) protein is Conotoxin Eb11.7.